The primary structure comprises 428 residues: E3 ubiquitin-protein ligase RNF128 (428 aa).

Residues Met-1–Gly-38 form the signal peptide. 3 N-linked (GlcNAc...) asparagine glycosylation sites follow: Asn-48, Asn-59, and Asn-101. Positions Ser-75–Ile-183 constitute a PA domain. Residues Ile-208–Phe-228 traverse the membrane as a helical segment. The RING-type; atypical zinc-finger motif lies at Cys-277–Lys-318. A disordered region spans residues Ile-346–Ser-428. Residues Glu-360–Gly-371 are compositionally biased toward polar residues.

Post-translationally, auto-ubiquitinated. Controls the development of T-cell clonal anergy by ubiquitination.

It localises to the cytoplasm. The protein resides in the endomembrane system. The protein localises to the cytoskeleton. It is found in the perinuclear region. The enzyme catalyses S-ubiquitinyl-[E2 ubiquitin-conjugating enzyme]-L-cysteine + [acceptor protein]-L-lysine = [E2 ubiquitin-conjugating enzyme]-L-cysteine + N(6)-ubiquitinyl-[acceptor protein]-L-lysine.. It participates in protein modification; protein ubiquitination. E3 ubiquitin-protein ligase that catalyzes 'Lys-27', 'Lys-48'- or 'Lys-63'-linked polyubiquitin chains formation and plays a role in different biological processes such as modulation of immune response, cytoskeletal dynamics or protein homeostasis. Inhibits IL2 and IL4 transcription, thereby playing an important role in the induction of the anergic phenotype, a long-term stable state of T-lymphocyte unresponsiveness to antigenic stimulation associated with the blockade of interleukin production. Ubiquitinates ARPC5 with 'Lys-48' linkages and COR1A with 'Lys-63' linkages leading to their degradation, down-regulation of these cytoskeletal components results in impaired lamellipodium formation and reduced accumulation of F-actin at the immunological synapse. Functions in the patterning of the dorsal ectoderm; sensitizes ectoderm to respond to neural-inducing signals. Plays a positive role in innate immune response by promoting 'Lys-63'-linked ubiquitination of TBK1 after RNA- or DNA-virus infection. Regulates alveolar macrophage activation and neutrophil infiltration by interacting with TLR4, targeting it for degradation, and inhibiting NF-kappa-B activation, hence decreasing pro-inflammatory cytokines. Negatively regulates the IL-3/STAT5 signaling pathway by facilitating 'Lys-27'-linked polyubiquitination of IL3RA leading to its degradation via lysosomal pathway. Directly regulates the N-glycosylation process in the endoplasmic reticulum by targeting the glycosyl-transferase RPN1 for ubiquitination and degradation. Other substrates targeted for degradation by RNF128 include transmembrane proteins CD40L, CD83 or the tetraspanin CD151. The sequence is that of E3 ubiquitin-protein ligase RNF128 (RNF128) from Homo sapiens (Human).